We begin with the raw amino-acid sequence, 359 residues long: Carbamoyl phosphate synthase small chain (359 aa).

The CPSase stretch occupies residues 1-169; that stretch reads MTKRILVLED…TKTSYPAPGV (169 aa). Residues S46, G220, and G222 each coordinate L-glutamine. The region spanning 172-358 is the Glutamine amidotransferase type-1 domain; it reads SVVLVDFGLK…IEMMEVFKQS (187 aa). The Nucleophile role is filled by C247. Residues M248, Q251, N289, G291, and Y292 each contribute to the L-glutamine site. Residues H331 and D333 contribute to the active site.

It belongs to the CarA family. In terms of assembly, composed of two chains; the small (or glutamine) chain promotes the hydrolysis of glutamine to ammonia, which is used by the large (or ammonia) chain to synthesize carbamoyl phosphate. Tetramer of heterodimers (alpha,beta)4.

It catalyses the reaction hydrogencarbonate + L-glutamine + 2 ATP + H2O = carbamoyl phosphate + L-glutamate + 2 ADP + phosphate + 2 H(+). The enzyme catalyses L-glutamine + H2O = L-glutamate + NH4(+). It functions in the pathway amino-acid biosynthesis; L-arginine biosynthesis; carbamoyl phosphate from bicarbonate: step 1/1. The protein operates within pyrimidine metabolism; UMP biosynthesis via de novo pathway; (S)-dihydroorotate from bicarbonate: step 1/3. Its function is as follows. Small subunit of the glutamine-dependent carbamoyl phosphate synthetase (CPSase). CPSase catalyzes the formation of carbamoyl phosphate from the ammonia moiety of glutamine, carbonate, and phosphate donated by ATP, constituting the first step of 2 biosynthetic pathways, one leading to arginine and/or urea and the other to pyrimidine nucleotides. The small subunit (glutamine amidotransferase) binds and cleaves glutamine to supply the large subunit with the substrate ammonia. This is Carbamoyl phosphate synthase small chain from Streptococcus pneumoniae (strain ATCC BAA-255 / R6).